Consider the following 178-residue polypeptide: Large ribosomal subunit protein uL5 (178 aa).

The protein belongs to the universal ribosomal protein uL5 family. In terms of assembly, part of the 50S ribosomal subunit; part of the 5S rRNA/L5/L18/L25 subcomplex. Contacts the 5S rRNA and the P site tRNA. Forms a bridge to the 30S subunit in the 70S ribosome.

This is one of the proteins that bind and probably mediate the attachment of the 5S RNA into the large ribosomal subunit, where it forms part of the central protuberance. In the 70S ribosome it contacts protein S13 of the 30S subunit (bridge B1b), connecting the 2 subunits; this bridge is implicated in subunit movement. Contacts the P site tRNA; the 5S rRNA and some of its associated proteins might help stabilize positioning of ribosome-bound tRNAs. The sequence is that of Large ribosomal subunit protein uL5 from Acinetobacter baylyi (strain ATCC 33305 / BD413 / ADP1).